Here is a 490-residue protein sequence, read N- to C-terminus: ATP synthase subunit beta, plastid (490 aa).

ATP is bound at residue 170 to 177 (GGAGVGKT).

This sequence belongs to the ATPase alpha/beta chains family. As to quaternary structure, F-type ATPases have 2 components, CF(1) - the catalytic core - and CF(0) - the membrane proton channel. CF(1) has five subunits: alpha(3), beta(3), gamma(1), delta(1), epsilon(1). CF(0) has four main subunits: a(1), b(1), b'(1) and c(9-12).

The protein localises to the plastid membrane. The enzyme catalyses ATP + H2O + 4 H(+)(in) = ADP + phosphate + 5 H(+)(out). Functionally, produces ATP from ADP in the presence of a proton gradient across the membrane. The catalytic sites are hosted primarily by the beta subunits. The polypeptide is ATP synthase subunit beta, plastid (atpB) (Cuscuta japonica (Japanese dodder)).